A 549-amino-acid polypeptide reads, in one-letter code: Cation/acetate symporter ActP (549 aa).

The next 13 membrane-spanning stretches (helical) occupy residues 33 to 53 (WQAI…TYWA), 77 to 97 (LAIA…ALVF), 103 to 123 (GLIY…LIAE), 148 to 168 (ILSA…QMVG), 183 to 203 (IAVV…GMLA), 206 to 226 (WVQI…AFMV), 262 to 282 (ISAL…PHIL), 303 to 323 (GFMG…IMLV), 355 to 375 (LFLG…VAGL), 404 to 424 (VSKI…VLFE), 428 to 448 (IAFM…PIIL), 464 to 484 (GGWL…TIWV), and 493 to 513 (IFPY…GIWF).

This sequence belongs to the sodium:solute symporter (SSF) (TC 2.A.21) family.

The protein resides in the cell inner membrane. Transports acetate. This chain is Cation/acetate symporter ActP, found in Escherichia coli O17:K52:H18 (strain UMN026 / ExPEC).